A 4034-amino-acid chain; its full sequence is Polyketide synthase-nonribosomal peptide synthetase ACE1 (4034 aa).

One can recognise a Ketosynthase family 3 (KS3) domain in the interval 10 to 448; the sequence is TEPIAIIGSG…GANAHVILES (439 aa). Residues Cys183, His322, and His368 each act as for beta-ketoacyl synthase activity in the active site. The tract at residues 560-879 is acyl transferase; that stretch reads VFTGQGAQWA…PYFGCLSRGT (320 aa). The segment at 951–1082 is N-terminal hotdog fold; sequence NELLGTRLPD…GDLVVLLGEP (132 aa). Residues 951–1257 enclose the PKS/mFAS DH domain; it reads NELLGTRLPD…TKPLSPPSAA (307 aa). The interval 952 to 1252 is dehydratase (DH) domain; sequence ELLGTRLPDD…LQGLHTKPLS (301 aa). Residue His983 is the Proton acceptor; for dehydratase activity of the active site. The interval 1097-1257 is C-terminal hotdog fold; sequence MKDIDEERFY…TKPLSPPSAA (161 aa). The Proton donor; for dehydratase activity role is filled by Asp1157. The segment at 1396-1594 is methyltransferase (MT) domain; sequence NMLNRFYSDA…SGADIVTPHH (199 aa). The ketoreductase (KR)domain stretch occupies residues 2144–2317; sequence TYWLVGLTGG…AGSSVEIGCI (174 aa). The Carrier 1 domain maps to 2424–2505; the sequence is KSSEEVLDIL…LLLEFVQGLI (82 aa). Ser2465 is modified (O-(pantetheine 4'-phosphoryl)serine). Residues 2512–2598 are disordered; it reads KLDGSDGADA…SPTTSASMAS (87 aa). Low complexity predominate over residues 2556 to 2577; the sequence is PSGPASPTSPSSATASPGRSRS. Positions 2586-2598 are enriched in polar residues; sequence TPVSPTTSASMAS. A condensation region spans residues 2608–3037; it reads TVPVSFGQSR…ATSLNRPAIY (430 aa). The adenylation stretch occupies residues 3073 to 3473; it reads KYATKFALRN…GGLIIEGRID (401 aa). The Carrier 2 domain occupies 3598–3678; sequence AELGSDQARM…AMTDLVLSDD (81 aa). At Ser3638 the chain carries O-(pantetheine 4'-phosphoryl)serine. A reductase-like region spans residues 3719–3944; the sequence is LTGATGFLGR…DFVSVENVAA (226 aa).

It belongs to the NRP synthetase family.

It is found in the cytoplasm. It functions in the pathway secondary metabolite biosynthesis. Functionally, hybrid PKS-NRPS synthetase; part of the gene cluster that mediates the biosynthesis of a tyrosine-derived cytochalasan acting as a fungal signal recognized by resistant rice plants and leads to avirulence in Pi33 resistant rice cultivars. The first step in the pathway is catalyzed by the hybrid PKS-NRPS ACE1, assisted by the enoyl reductase RAP1, that are responsible for fusion of the tyrosine precursor and the polyketide backbone. The polyketide synthase module (PKS) of ACE1 is responsible for the synthesis of the polyketide backbone and the downstream nonribosomal peptide synthetase (NRPS) amidates the carboxyl end of the polyketide with the tyrosine precursor. Because ACE1 lacks a designated enoylreductase (ER) domain, the required activity is provided the enoyl reductase RAP1. Reduction by the hydrolyase ORFZ, followed by dehydration and intra-molecular Diels-Alder cyclization by the Diels-Alderase ORF3 then yield the required isoindolone-fused macrocycle. A number of oxidative steps catalyzed by the tailoring enzymes identified within the cluster, including cytochrome P450 monooxygenases CYP1 to CYP4, the FAD-linked oxidoreductase OXR2 and the short-chain dehydrogenase/reductase OXR1, are further required to afford the final cytochalasans that confer avirulence and which have still to be identified. The monooxygenase CYP1 has been shown to be a site-selective C-18 hydroxylase whereas the function of CYP3 is the site-selective epoxidation of the C-6/C-7 olefin that is present in some intermediate compounds. Finally, SYN2 and RAP2 are not required for avirulence in Pi33 resistant rice cultivars. In Pyricularia oryzae (strain 70-15 / ATCC MYA-4617 / FGSC 8958) (Rice blast fungus), this protein is Polyketide synthase-nonribosomal peptide synthetase ACE1.